A 265-amino-acid polypeptide reads, in one-letter code: 4-hydroxy-tetrahydrodipicolinate reductase (265 aa).

NAD(+)-binding positions include G7 to M12, D33, G96 to T98, and A120 to F123. H153 serves as the catalytic Proton donor/acceptor. (S)-2,3,4,5-tetrahydrodipicolinate is bound at residue H154. The active-site Proton donor is the K157. G163–T164 contacts (S)-2,3,4,5-tetrahydrodipicolinate.

The protein belongs to the DapB family.

It is found in the cytoplasm. It carries out the reaction (S)-2,3,4,5-tetrahydrodipicolinate + NAD(+) + H2O = (2S,4S)-4-hydroxy-2,3,4,5-tetrahydrodipicolinate + NADH + H(+). The enzyme catalyses (S)-2,3,4,5-tetrahydrodipicolinate + NADP(+) + H2O = (2S,4S)-4-hydroxy-2,3,4,5-tetrahydrodipicolinate + NADPH + H(+). It participates in amino-acid biosynthesis; L-lysine biosynthesis via DAP pathway; (S)-tetrahydrodipicolinate from L-aspartate: step 4/4. In terms of biological role, catalyzes the conversion of 4-hydroxy-tetrahydrodipicolinate (HTPA) to tetrahydrodipicolinate. The polypeptide is 4-hydroxy-tetrahydrodipicolinate reductase (Cupriavidus taiwanensis (strain DSM 17343 / BCRC 17206 / CCUG 44338 / CIP 107171 / LMG 19424 / R1) (Ralstonia taiwanensis (strain LMG 19424))).